The primary structure comprises 466 residues: Rhodanese-like domain-containing protein 4, chloroplastic (466 aa).

The transit peptide at 1–15 directs the protein to the chloroplast; it reads MEALKTATFSPMSVL. The interval 1 to 35 is disordered; sequence MEALKTATFSPMSVLSEKRSEPRKPFSLPNLFPPK. Residues 16–69 constitute a thylakoid transit peptide; the sequence is SEKRSEPRKPFSLPNLFPPKSQRPISQESFLKRFNGGLALLTSVLSSATAPAKS. Residues 103–123 form a helical membrane-spanning segment; that stretch reads PLVIAGGVAALAVPFVLSQVL. Residues 144-250 enclose the Rhodanese domain; that stretch reads TDDNAQLLDI…WLNSSLPWIE (107 aa). A helical transmembrane segment spans residues 277–297; that stretch reads VSVALGVAAAAGLSVFAFTEI. Low complexity predominate over residues 373–384; it reads EAESATATTTTV. 2 disordered regions span residues 373–392 and 426–466; these read EAES…PEPE and AQVI…PSQP. Residues 455–466 are compositionally biased toward pro residues; sequence LKPPSSPMPSQP.

As to quaternary structure, component of high molecular weight thylakoid LFNRs-containing protein complexes containing LIR1, LFNR1, LFNR2, TIC62 and TROL proteins. In terms of tissue distribution, expressed in leaves and stems, and at lower levels in flowers and siliques (at protein level).

The protein resides in the plastid. Its subcellular location is the chloroplast envelope. The protein localises to the chloroplast thylakoid membrane. Rhodanese domain-containing protein required for anchoring ferredoxin--NADP reductase to the thylakoid membranes and sustaining efficient linear electron flow (LEF). This is Rhodanese-like domain-containing protein 4, chloroplastic from Arabidopsis thaliana (Mouse-ear cress).